Here is a 469-residue protein sequence, read N- to C-terminus: Asparagine--tRNA ligase (469 aa).

It belongs to the class-II aminoacyl-tRNA synthetase family. In terms of assembly, homodimer.

Its subcellular location is the cytoplasm. The catalysed reaction is tRNA(Asn) + L-asparagine + ATP = L-asparaginyl-tRNA(Asn) + AMP + diphosphate + H(+). This chain is Asparagine--tRNA ligase, found in Porphyromonas gingivalis (strain ATCC 33277 / DSM 20709 / CIP 103683 / JCM 12257 / NCTC 11834 / 2561).